The primary structure comprises 84 residues: Putative membrane protein insertion efficiency factor (84 aa).

It belongs to the UPF0161 family.

The protein localises to the cell inner membrane. In terms of biological role, could be involved in insertion of integral membrane proteins into the membrane. This is Putative membrane protein insertion efficiency factor from Nostoc sp. (strain PCC 7120 / SAG 25.82 / UTEX 2576).